The primary structure comprises 136 residues: Globin CTP-III (136 aa).

The region spanning 1–136 (LSADQISTVQ…TFFGMIFSKM (136 aa)) is the Globin domain. Histidine 87 is a heme b binding site.

The protein belongs to the globin family. Monomer.

The protein is Globin CTP-III of Chironomus thummi piger (Midge).